Consider the following 181-residue polypeptide: uncharacterized protein (181 aa).

A Macro domain is found at 1-178 (MVVAYKLSNG…VFKKVFDNSL (178 aa)).

This is an uncharacterized protein from Sulfolobus acidocaldarius (strain ATCC 33909 / DSM 639 / JCM 8929 / NBRC 15157 / NCIMB 11770).